Consider the following 133-residue polypeptide: Pilotin OutS (133 aa).

The first 20 residues, 1 to 20, serve as a signal peptide directing secretion; sequence MHVSSLKVVLFGVCCLSLAA. The N-palmitoyl cysteine moiety is linked to residue Cys-21. Cys-21 carries the S-diacylglycerol cysteine lipid modification. A disulfide bridge connects residues Cys-61 and Cys-115.

The protein to K.pneumoniae PulS. Interacts with secretin OutD.

The protein resides in the cell outer membrane. Functionally, out proteins are required for the translocation of pectate lyases and cellulases across the outer membrane. The polypeptide is Pilotin OutS (outS) (Dickeya dadantii (strain 3937) (Erwinia chrysanthemi (strain 3937))).